A 743-amino-acid polypeptide reads, in one-letter code: Polyribonucleotide nucleotidyltransferase (743 aa).

Mg(2+)-binding residues include Asp489 and Asp495. The 63-residue stretch at 556–618 folds into the KH domain; it reads PRIEKMHIGK…PCIDAAIGMI (63 aa). The 71-residue stretch at 628–698 folds into the S1 motif domain; that stretch reads GETYPGKITS…KTGKFKLSRK (71 aa). The tract at residues 704–743 is disordered; it reads PEGYVEPQPRERRERREGGREGGRNFERRGGDRDHREPRG.

This sequence belongs to the polyribonucleotide nucleotidyltransferase family. Mg(2+) serves as cofactor.

The protein localises to the cytoplasm. The catalysed reaction is RNA(n+1) + phosphate = RNA(n) + a ribonucleoside 5'-diphosphate. Involved in mRNA degradation. Catalyzes the phosphorolysis of single-stranded polyribonucleotides processively in the 3'- to 5'-direction. This chain is Polyribonucleotide nucleotidyltransferase, found in Porphyromonas gingivalis (strain ATCC BAA-308 / W83).